The primary structure comprises 133 residues: Transcription antitermination protein NusB (133 aa).

This sequence belongs to the NusB family.

Functionally, involved in transcription antitermination. Required for transcription of ribosomal RNA (rRNA) genes. Binds specifically to the boxA antiterminator sequence of the ribosomal RNA (rrn) operons. The chain is Transcription antitermination protein NusB from Shewanella denitrificans (strain OS217 / ATCC BAA-1090 / DSM 15013).